Reading from the N-terminus, the 511-residue chain is Cytochrome P450 76C4 (511 aa).

Residues 3 to 23 form a helical membrane-spanning segment; the sequence is IISGQALFLLFCFISSCFLIS. Residue cysteine 450 coordinates heme.

Belongs to the cytochrome P450 family. The cofactor is heme.

It localises to the membrane. The protein is Cytochrome P450 76C4 (CYP76C4) of Arabidopsis thaliana (Mouse-ear cress).